The following is a 508-amino-acid chain: Photosystem II CP47 reaction center protein (508 aa).

A run of 6 helical transmembrane segments spans residues 21-36 (SVHI…WAGS), 101-115 (IVFS…IWHW), 140-156 (GIHL…FGAF), 203-218 (IAAG…FHLS), 237-252 (VLSS…AFVV), and 457-472 (SFAL…HGAR).

The protein belongs to the PsbB/PsbC family. PsbB subfamily. As to quaternary structure, PSII is composed of 1 copy each of membrane proteins PsbA, PsbB, PsbC, PsbD, PsbE, PsbF, PsbH, PsbI, PsbJ, PsbK, PsbL, PsbM, PsbT, PsbX, PsbY, PsbZ, Psb30/Ycf12, at least 3 peripheral proteins of the oxygen-evolving complex and a large number of cofactors. It forms dimeric complexes. Binds multiple chlorophylls. PSII binds additional chlorophylls, carotenoids and specific lipids. is required as a cofactor.

Its subcellular location is the plastid. The protein resides in the chloroplast thylakoid membrane. One of the components of the core complex of photosystem II (PSII). It binds chlorophyll and helps catalyze the primary light-induced photochemical processes of PSII. PSII is a light-driven water:plastoquinone oxidoreductase, using light energy to abstract electrons from H(2)O, generating O(2) and a proton gradient subsequently used for ATP formation. This Gossypium hirsutum (Upland cotton) protein is Photosystem II CP47 reaction center protein.